A 263-amino-acid chain; its full sequence is ATP synthase subunit a (263 aa).

6 helical membrane passes run 26–46, 86–106, 130–150, 166–186, 195–215, and 229–249; these read VHLD…FFFS, VAPL…IDLI, DISA…FYTI, PFNH…TLLA, LFGN…MYMA, and LAWA…FMML.

Belongs to the ATPase A chain family. In terms of assembly, F-type ATPases have 2 components, CF(1) - the catalytic core - and CF(0) - the membrane proton channel. CF(1) has five subunits: alpha(3), beta(3), gamma(1), delta(1), epsilon(1). CF(0) has three main subunits: a(1), b(2) and c(9-12). The alpha and beta chains form an alternating ring which encloses part of the gamma chain. CF(1) is attached to CF(0) by a central stalk formed by the gamma and epsilon chains, while a peripheral stalk is formed by the delta and b chains.

It is found in the cell inner membrane. Functionally, key component of the proton channel; it plays a direct role in the translocation of protons across the membrane. The polypeptide is ATP synthase subunit a (Glaesserella parasuis serovar 5 (strain SH0165) (Haemophilus parasuis)).